Consider the following 307-residue polypeptide: Small ribosomal subunit biogenesis GTPase RsgA (307 aa).

Residues 64–229 form the CP-type G domain; it reads KNSLIRPSIA…IADTPGFSSL (166 aa). GTP contacts are provided by residues 113 to 116 and 172 to 180; these read SKLD and GQTGAGKTT. 4 residues coordinate Zn(2+): cysteine 253, cysteine 258, histidine 260, and cysteine 266.

The protein belongs to the TRAFAC class YlqF/YawG GTPase family. RsgA subfamily. In terms of assembly, monomer. Associates with 30S ribosomal subunit, binds 16S rRNA. Requires Zn(2+) as cofactor.

Its subcellular location is the cytoplasm. In terms of biological role, one of several proteins that assist in the late maturation steps of the functional core of the 30S ribosomal subunit. Helps release RbfA from mature subunits. May play a role in the assembly of ribosomal proteins into the subunit. Circularly permuted GTPase that catalyzes slow GTP hydrolysis, GTPase activity is stimulated by the 30S ribosomal subunit. The chain is Small ribosomal subunit biogenesis GTPase RsgA from Lactococcus lactis subsp. lactis (strain IL1403) (Streptococcus lactis).